The chain runs to 724 residues: Acyl-coenzyme A oxidase 2 (724 aa).

The disordered stretch occupies residues 1–23 (MALISNLKDEYDHPTKTDPDTNP). Basic and acidic residues predominate over residues 7–21 (LKDEYDHPTKTDPDT).

This sequence belongs to the acyl-CoA oxidase family. FAD serves as cofactor.

The protein resides in the peroxisome. The enzyme catalyses a 2,3-saturated acyl-CoA + O2 = a (2E)-enoyl-CoA + H2O2. The protein operates within lipid metabolism; peroxisomal fatty acid beta-oxidation. In Candida maltosa (Yeast), this protein is Acyl-coenzyme A oxidase 2 (POX2).